The following is a 524-amino-acid chain: Bifunctional purine biosynthesis protein PurH (524 aa).

Residues 1-149 enclose the MGS-like domain; that stretch reads MSDPVIKRAL…KNNESVTVVT (149 aa).

The protein belongs to the PurH family.

It carries out the reaction (6R)-10-formyltetrahydrofolate + 5-amino-1-(5-phospho-beta-D-ribosyl)imidazole-4-carboxamide = 5-formamido-1-(5-phospho-D-ribosyl)imidazole-4-carboxamide + (6S)-5,6,7,8-tetrahydrofolate. It catalyses the reaction IMP + H2O = 5-formamido-1-(5-phospho-D-ribosyl)imidazole-4-carboxamide. It functions in the pathway purine metabolism; IMP biosynthesis via de novo pathway; 5-formamido-1-(5-phospho-D-ribosyl)imidazole-4-carboxamide from 5-amino-1-(5-phospho-D-ribosyl)imidazole-4-carboxamide (10-formyl THF route): step 1/1. The protein operates within purine metabolism; IMP biosynthesis via de novo pathway; IMP from 5-formamido-1-(5-phospho-D-ribosyl)imidazole-4-carboxamide: step 1/1. This is Bifunctional purine biosynthesis protein PurH from Chlorobium chlorochromatii (strain CaD3).